Consider the following 1018-residue polypeptide: D-2-hydroxyglutarate dehydrogenase (1018 aa).

One can recognise an FAD-binding PCMH-type domain in the interval 48–281 (YQLLPDAVVF…TEARLDITRL (234 aa)). (R)-2-hydroxyglutarate is bound by residues R402 and H500. Residues 662–695 (FSHEVKEAMSGCLACKACSTQCPIKIDVPEFRSR) form the 4Fe-4S ferredoxin-type domain. The [4Fe-4S] cluster site is built by C673, C676, C679, and C683.

It in the N-terminal section; belongs to the FAD-binding oxidoreductase/transferase type 4 family. As to quaternary structure, homotetramer. It depends on [4Fe-4S] cluster as a cofactor. The cofactor is FAD.

It catalyses the reaction (R)-2-hydroxyglutarate + A = 2-oxoglutarate + AH2. Its activity is regulated as follows. Activity is completely inhibited by the addition of 0.5 mM Mn(2+), Ni(2+), or Co(2+) and partially inhibited by 0.5 mM Zn(2+). Its function is as follows. Catalyzes the oxidation of D-2-hydroxyglutarate (D-2-HGA) to 2-oxoglutarate. Appears to be the only D2HGDH in E.coli, providing the way to recycle D-2-HGA produced during L-serine synthesis by SerA, by converting it back to 2-oxoglutarate. The physiological molecule that functions as the primary electron acceptor during D-2-HGA oxidation by YdiJ in E.coli is unknown. Shows strict substrate specificity towards D-2-HGA, since it has no detectable activity on L-2-hydroxyglutarate, L-malate, D-malate, L-lactate, D-lactate, L-tartrate, D-tartrate, L-glycerate, D-glycerate, glutarate, or pyruvate. This chain is D-2-hydroxyglutarate dehydrogenase (ydiJ), found in Escherichia coli (strain K12).